A 1857-amino-acid polypeptide reads, in one-letter code: Phosphatidylinositol 3-kinase 2 (1857 aa).

2 stretches are compositionally biased toward low complexity: residues Met-1–Ser-32 and Asn-42–Ser-55. 5 disordered regions span residues Met-1–Thr-61, Thr-145–Val-313, Ser-348–Arg-468, Ile-481–Val-512, and Glu-530–Val-573. Residues Thr-145 to Ile-155 show a composition bias toward polar residues. Positions Asn-162–Ser-269 are enriched in low complexity. Residues Gly-270–Gln-281 show a composition bias toward polar residues. Composition is skewed to low complexity over residues Thr-288–Asn-311 and Leu-352–Asn-464. Residues Ile-533–Ser-560 are compositionally biased toward low complexity. A compositionally biased stretch (gly residues) spans Ile-561 to Gly-570. Positions Pro-821–Asn-934 constitute a PI3K-RBD domain. Residues Lys-996 to Pro-1078 form a disordered region. A compositionally biased stretch (basic and acidic residues) spans Glu-997–Asp-1011. Residues Ser-1012–Asn-1056 show a composition bias toward low complexity. The C2 PI3K-type domain occupies Val-1099–Glu-1271. Positions Pro-1326–Ser-1503 constitute a PIK helical domain. One can recognise a PI3K/PI4K catalytic domain in the interval Ile-1568–Thr-1845. Residues Tyr-1574–Leu-1580 are G-loop. Residues Gly-1711 to Asn-1719 form a catalytic loop region. Positions His-1730–Thr-1756 are activation loop.

It belongs to the PI3/PI4-kinase family.

The catalysed reaction is a 1,2-diacyl-sn-glycero-3-phospho-(1D-myo-inositol) + ATP = a 1,2-diacyl-sn-glycero-3-phospho-(1D-myo-inositol-3-phosphate) + ADP + H(+). The protein is Phosphatidylinositol 3-kinase 2 (pikB) of Dictyostelium discoideum (Social amoeba).